The primary structure comprises 141 residues: Hemoglobin subunit alpha (141 aa).

Residues Val-1–Arg-141 form the Globin domain. Ser-3 bears the Phosphoserine mark. N6-succinyllysine occurs at positions 7 and 11. Lys-16 is subject to N6-acetyllysine; alternate. Lys-16 carries the post-translational modification N6-succinyllysine; alternate. Lys-40 is modified (N6-succinyllysine). Ser-49 is modified (phosphoserine). His-58 provides a ligand contact to O2. His-87 contacts heme b. Position 102 is a phosphoserine (Ser-102). Thr-108 carries the post-translational modification Phosphothreonine. Ser-124 carries the post-translational modification Phosphoserine. Thr-134 and Thr-137 each carry phosphothreonine. Position 138 is a phosphoserine (Ser-138).

The protein belongs to the globin family. As to quaternary structure, heterotetramer of two alpha chains and two beta chains. As to expression, red blood cells.

In terms of biological role, involved in oxygen transport from the lung to the various peripheral tissues. Its function is as follows. Hemopressin acts as an antagonist peptide of the cannabinoid receptor CNR1. Hemopressin-binding efficiently blocks cannabinoid receptor CNR1 and subsequent signaling. The protein is Hemoglobin subunit alpha (HBA) of Sus scrofa (Pig).